Consider the following 468-residue polypeptide: Glucose transport protein (468 aa).

Residues Met1–Val17 are Cytoplasmic-facing. A helical membrane pass occupies residues Leu18–Ile38. Residues Asn39–Leu58 lie on the Extracellular side of the membrane. A helical transmembrane segment spans residues Ser59 to Ala78. Over Asp79–Ile84 the chain is Cytoplasmic. Residues Lys85–Phe105 traverse the membrane as a helical segment. Over Thr106–Arg114 the chain is Extracellular. Residues Val115–Val135 form a helical membrane-spanning segment. The Cytoplasmic portion of the chain corresponds to Ser136–Gln149. A helical membrane pass occupies residues Leu150–Ala170. The Extracellular portion of the chain corresponds to Gly171–Arg186. Residues Trp187–Pro207 form a helical membrane-spanning segment. Residues Glu208–Pro265 lie on the Cytoplasmic side of the membrane. Residues Ile266–Phe286 traverse the membrane as a helical segment. Over Tyr287–Thr307 the chain is Extracellular. The chain crosses the membrane as a helical span at residues Val308 to Phe328. The Cytoplasmic segment spans residues Gly329–Lys331. Residues Pro332–Phe352 form a helical membrane-spanning segment. Residues Gly353–Gly366 are Extracellular-facing. Residues Ala367 to Trp387 form a helical membrane-spanning segment. Residues Gly388–Ala412 lie on the Cytoplasmic side of the membrane. The helical transmembrane segment at Gly413–Val433 threads the bilayer. The Extracellular segment spans residues Gly434–Gly436. The helical transmembrane segment at Pro437–Val457 threads the bilayer. At Lys458–Met468 the chain is on the cytoplasmic side.

Belongs to the major facilitator superfamily. Sugar transporter (TC 2.A.1.1) family.

The protein resides in the cell membrane. The polypeptide is Glucose transport protein (gtr) (Synechocystis sp. (strain ATCC 27184 / PCC 6803 / Kazusa)).